The sequence spans 814 residues: Outer membrane usher protein SefC (814 aa).

Residues 1–30 (MKKTTITLFVLTSVFHSGNVFSRQYNFDYG) form the signal peptide. Cys792 and Cys813 are disulfide-bonded.

This sequence belongs to the fimbrial export usher family.

The protein localises to the cell outer membrane. Involved in the export and assembly of the SefA fimbrial subunit. This is Outer membrane usher protein SefC (sefC) from Salmonella enteritidis.